Consider the following 227-residue polypeptide: General transcription factor 3C polypeptide 6 (227 aa).

The segment at 157-227 is disordered; that stretch reads DEAAGPASDK…DGNVSQNNQS (71 aa). Basic and acidic residues predominate over residues 186-195; it reads EQEKVEHSEV. Residues 203 to 227 show a composition bias toward polar residues; that stretch reads ETPSEMESSVFMGTQDGNVSQNNQS.

The protein belongs to the TFIIIC subunit 6 family. Part of the TFIIIC subcomplex TFIIIC2, consisting of six subunits, GTF3C1, GTF3C2, GTF3C3, GTF3C4, GTF3C5 and GTF3C6. Interacts with GTF3C4 and GTF3C5.

It is found in the nucleus. Its function is as follows. Involved in RNA polymerase III-mediated transcription. Integral, tightly associated component of the DNA-binding TFIIIC2 subcomplex that directly binds tRNA and virus-associated RNA promoters. This Mus musculus (Mouse) protein is General transcription factor 3C polypeptide 6.